Reading from the N-terminus, the 557-residue chain is Portal protein (557 aa).

The protein belongs to the herpesviridae portal protein family. Homododecamerizes. Interacts with terminase subunits TRM1 and TRM3.

It localises to the virion. The protein localises to the host nucleus. Functionally, forms a portal in the viral capsid through which viral DNA is translocated during DNA packaging. Assembles as a dodecamer at a single fivefold axe of the T=16 icosahedric capsid. Binds to the molecular motor that translocates the viral DNA, termed terminase. This Connochaetes taurinus (Blue wildebeest) protein is Portal protein (43).